A 314-amino-acid chain; its full sequence is tRNA dimethylallyltransferase (314 aa).

Residue 9–16 (GPTAVGKT) coordinates ATP. Residue 11-16 (TAVGKT) participates in substrate binding. The interval 34 to 37 (DSMQ) is interaction with substrate tRNA.

This sequence belongs to the IPP transferase family. Monomer. The cofactor is Mg(2+).

The enzyme catalyses adenosine(37) in tRNA + dimethylallyl diphosphate = N(6)-dimethylallyladenosine(37) in tRNA + diphosphate. Its function is as follows. Catalyzes the transfer of a dimethylallyl group onto the adenine at position 37 in tRNAs that read codons beginning with uridine, leading to the formation of N6-(dimethylallyl)adenosine (i(6)A). In Clostridium tetani (strain Massachusetts / E88), this protein is tRNA dimethylallyltransferase.